A 127-amino-acid polypeptide reads, in one-letter code: Small ribosomal subunit protein eS8 (127 aa).

Positions 1-31 are disordered; sequence MTIFQGKSGKKATGGSLKQSRKKRRFELGRE.

The protein belongs to the eukaryotic ribosomal protein eS8 family. As to quaternary structure, part of the 30S ribosomal subunit.

The polypeptide is Small ribosomal subunit protein eS8 (rps8e) (Thermoplasma acidophilum (strain ATCC 25905 / DSM 1728 / JCM 9062 / NBRC 15155 / AMRC-C165)).